Consider the following 518-residue polypeptide: Membrane-bound lytic murein transglycosylase F (518 aa).

The signal sequence occupies residues 1 to 21; the sequence is MKKLKINYLFIGILALLLAVA. The segment at 22 to 269 is non-LT domain; that stretch reads LWPSIPWFGK…RIEEKYLGHG (248 aa). The LT domain stretch occupies residues 270-518; that stretch reads DDFDYVDTRT…SRKGSEEKQN (249 aa). The active site involves glutamate 314.

This sequence in the N-terminal section; belongs to the bacterial solute-binding protein 3 family. The protein in the C-terminal section; belongs to the transglycosylase Slt family.

The protein resides in the cell outer membrane. It carries out the reaction Exolytic cleavage of the (1-&gt;4)-beta-glycosidic linkage between N-acetylmuramic acid (MurNAc) and N-acetylglucosamine (GlcNAc) residues in peptidoglycan, from either the reducing or the non-reducing ends of the peptidoglycan chains, with concomitant formation of a 1,6-anhydrobond in the MurNAc residue.. Murein-degrading enzyme that degrades murein glycan strands and insoluble, high-molecular weight murein sacculi, with the concomitant formation of a 1,6-anhydromuramoyl product. Lytic transglycosylases (LTs) play an integral role in the metabolism of the peptidoglycan (PG) sacculus. Their lytic action creates space within the PG sacculus to allow for its expansion as well as for the insertion of various structures such as secretion systems and flagella. This Escherichia coli (strain ATCC 8739 / DSM 1576 / NBRC 3972 / NCIMB 8545 / WDCM 00012 / Crooks) protein is Membrane-bound lytic murein transglycosylase F.